Consider the following 305-residue polypeptide: Sulfate adenylyltransferase subunit 2 (305 aa).

The protein belongs to the PAPS reductase family. CysD subfamily. In terms of assembly, heterodimer composed of CysD, the smaller subunit, and CysN.

The catalysed reaction is sulfate + ATP + H(+) = adenosine 5'-phosphosulfate + diphosphate. The protein operates within sulfur metabolism; hydrogen sulfide biosynthesis; sulfite from sulfate: step 1/3. Functionally, with CysN forms the ATP sulfurylase (ATPS) that catalyzes the adenylation of sulfate producing adenosine 5'-phosphosulfate (APS) and diphosphate, the first enzymatic step in sulfur assimilation pathway. APS synthesis involves the formation of a high-energy phosphoric-sulfuric acid anhydride bond driven by GTP hydrolysis by CysN coupled to ATP hydrolysis by CysD. The chain is Sulfate adenylyltransferase subunit 2 from Pseudomonas fluorescens (strain ATCC BAA-477 / NRRL B-23932 / Pf-5).